Here is a 124-residue protein sequence, read N- to C-terminus: Galanin peptides (124 aa).

A signal peptide spans 1-19 (MARGSVILLAWLLLVATLS). A propeptide spanning residues 20–30 (ATLGLGMPTKE) is cleaved from the precursor. Threonine 61 carries the post-translational modification Threonine amide. Phosphoserine is present on residues serine 117 and serine 118.

Belongs to the galanin family.

The protein localises to the secreted. Its function is as follows. Endocrine hormone of the central and peripheral nervous systems that binds and activates the G protein-coupled receptors GALR1, GALR2, and GALR3. This small neuropeptide may regulate diverse physiologic functions including contraction of smooth muscle of the gastrointestinal and genitourinary tract, growth hormone and insulin release and adrenal secretion. This chain is Galanin peptides (Gal), found in Rattus norvegicus (Rat).